The sequence spans 474 residues: ERO1-like protein alpha (474 aa).

The N-terminal stretch at methionine 1–serine 29 is a signal peptide. 8 disulfide bridges follow: cysteine 40-cysteine 53, cysteine 42-cysteine 51, cysteine 90-cysteine 398, cysteine 99-cysteine 104, cysteine 99-cysteine 138, cysteine 104-cysteine 109, cysteine 215-cysteine 248, and cysteine 401-cysteine 404. Positions 194, 196, and 207 each coordinate FAD. Serine 259, histidine 262, arginine 294, and arginine 307 together coordinate FAD. N-linked (GlcNAc...) asparagine glycans are attached at residues asparagine 340 and asparagine 391. Asparagine 430 is a glycosylation site (N-linked (GlcNAc...) asparagine).

This sequence belongs to the EROs family. As to quaternary structure, predominantly monomer. May function both as a monomer and a homodimer. FAD serves as cofactor. The Cys-99/Cys-104 and Cys-401/Cys-404 disulfide bonds constitute the redox-active center. The Cys-99/Cys-104 disulfide bond may accept electron from protein disulfide isomerase (PDI) and funnel them to the active site disulfide Cys-401/Cys-404.

Its subcellular location is the endoplasmic reticulum membrane. Its activity is regulated as follows. Enzyme activity is tightly regulated to prevent the accumulation of reactive oxygen species in the endoplasmic reticulum. Reversibly down-regulated by the formation of disulfide bonds between the active site Cys-99 and Cys-138, and between Cys-104 and Cys-109. Glutathione may be required to regulate its activity in the endoplasmic reticulum. In terms of biological role, oxidoreductase involved in disulfide bond formation in the endoplasmic reticulum. Efficiently reoxidizes P4HB/PDI, the enzyme catalyzing protein disulfide formation, in order to allow P4HB to sustain additional rounds of disulfide formation. Following P4HB reoxidation, passes its electrons to molecular oxygen via FAD, leading to the production of reactive oxygen species (ROS) in the cell. Required for the folding of immunoglobulins. The protein is ERO1-like protein alpha of Xenopus tropicalis (Western clawed frog).